The primary structure comprises 398 residues: Carbamoyl phosphate synthase large chain (398 aa).

The ATP-grasp domain maps to 1–187; it reads KLGVPQPEGG…LAKIAAKVIV (187 aa). The tract at residues 1 to 255 is carbamoyl phosphate synthetic domain; the sequence is KLGVPQPEGG…YKAELAADNV (255 aa). Residues Arg-32, Asp-71, Leu-73, Glu-78, Gly-103, Val-104, His-105, Ser-106, Gln-146, and Glu-158 each coordinate ATP. Mg(2+) is bound by residues Gln-146, Glu-158, and Asn-160. Mn(2+)-binding residues include Gln-146, Glu-158, and Asn-160. In terms of domain architecture, MGS-like spans 254–395; the sequence is NVLPLTGKVF…NEYHKEMEEE (142 aa). Positions 256–398 are allosteric domain; that stretch reads LPLTGKVFLS…HKEMEEENKV (143 aa).

It belongs to the CarB family. In terms of assembly, composed of two chains; the small (or glutamine) chain promotes the hydrolysis of glutamine to ammonia, which is used by the large (or ammonia) chain to synthesize carbamoyl phosphate. Tetramer of heterodimers (alpha,beta)4. Mg(2+) is required as a cofactor. Mn(2+) serves as cofactor.

It carries out the reaction hydrogencarbonate + L-glutamine + 2 ATP + H2O = carbamoyl phosphate + L-glutamate + 2 ADP + phosphate + 2 H(+). The catalysed reaction is hydrogencarbonate + NH4(+) + 2 ATP = carbamoyl phosphate + 2 ADP + phosphate + 2 H(+). It participates in amino-acid biosynthesis; L-arginine biosynthesis; carbamoyl phosphate from bicarbonate: step 1/1. It functions in the pathway pyrimidine metabolism; UMP biosynthesis via de novo pathway; (S)-dihydroorotate from bicarbonate: step 1/3. In terms of biological role, large subunit of the glutamine-dependent carbamoyl phosphate synthetase (CPSase). CPSase catalyzes the formation of carbamoyl phosphate from the ammonia moiety of glutamine, carbonate, and phosphate donated by ATP, constituting the first step of 2 biosynthetic pathways, one leading to arginine and/or urea and the other to pyrimidine nucleotides. The large subunit (synthetase) binds the substrates ammonia (free or transferred from glutamine from the small subunit), hydrogencarbonate and ATP and carries out an ATP-coupled ligase reaction, activating hydrogencarbonate by forming carboxy phosphate which reacts with ammonia to form carbamoyl phosphate. This is Carbamoyl phosphate synthase large chain from Methanosarcina barkeri.